We begin with the raw amino-acid sequence, 1255 residues long: MEPSGGGLGPGRGTRDKKKGRSPDELPATGGDGGKHKKFLERFTSMRIKKEKEKPNSAHRNSSASYGDDPTAQSLQDISDEQVLVLFEQMLVDMNLNEEKQQPLREKDIVIKREMVSQYLHTSKAGMNQKESSRSAMMYIQELRSGLRDMHLLSCLESLRVSLNNNPVSWVQTFGAEGLASLLDILKRLHDEKEETSGNYDSRNQHEIIRCLKAFMNNKFGIKTMLETEEGILLLVRAMDPAVPNMMIDAAKLLSALCILPQPEDMNERVLEAMTERAEMDEVERFQPLLDGLKSGTSIALKVGCLQLINALITPAEELDFRVHIRSELMRLGLHQVLQELREIENEDMKVQLCVFDEQGDEDFFDLKGRLDDIRMEMDDFGEVFQIILNTVKDSKAEPHFLSILQHLLLVRNDYEARPQYYKLIEECVSQIVLHKNGTDPDFKCRHLQIDIERLVDQMIDKTKVEKSEAKATELEKKLDSELTARHELQVEMKKMENDFEQKLQDLQGEKDALDSEKQQITAQKQDLEAEVSKLTGEVAKLSKELEDAKNEMASLSAVVVAPSVSSSAAVPPAPPLPGDSGTVIPPPPPPPPLPGGVVPPSPPLPPGTCIPPPPPLPGGACIPPPPQLPGSAAIPPPPPLPGVASIPPPPPLPGATAIPPPPPLPGATAIPPPPPLPGGTGIPPPPPPLPGSVGVPPPPPLPGGPGLPPPPPPFPGAPGIPPPPPGMGVPPPPPFGFGVPAAPVLPFGLTPKKVYKPEVQLRRPNWSKFVAEDLSQDCFWTKVKEDRFENNELFAKLTLAFSAQTKTSKAKKDQEGGEEKKSVQKKKVKELKVLDSKTAQNLSIFLGSFRMPYQEIKNVILEVNEAVLTESMIQNLIKQMPEPEQLKMLSELKEEYDDLAESEQFGVVMGTVPRLRPRLNAILFKLQFSEQVENIKPEIVSVTAACEELRKSENFSSLLELTLLVGNYMNAGSRNAGAFGFNISFLCKLRDTKSADQKMTLLHFLAELCENDHPEVLKFPDELAHVEKASRVSAENLQKSLDQMKKQIADVERDVQNFPAATDEKDKFVEKMTSFVKDAQEQYNKLRMMHSNMETLYKELGDYFVFDPKKLSVEEFFMDLHNFRNMFLQAVKENQKRRETEEKMRRAKLAKEKAEKERLEKQQKREQLIDMNAEGDETGVMDSLLEALQSGAAFRRKRGPRQVNRKAGCAVTSLLASELTKDDAMAPGPVKVPKKSEGVPTILEEAKELVGRAS.

Met-1 carries the post-translational modification N-acetylmethionine. The segment covering 1-12 (MEPSGGGLGPGR) has biased composition (gly residues). The disordered stretch occupies residues 1 to 73 (MEPSGGGLGP…ASYGDDPTAQ (73 aa)). A Phosphoserine modification is found at Ser-22. Residues 58 to 73 (AHRNSSASYGDDPTAQ) are compositionally biased toward polar residues. The GBD/FH3 domain occupies 75–440 (LQDISDEQVL…QIVLHKNGTD (366 aa)). The stretch at 460-562 (IDKTKVEKSE…MASLSAVVVA (103 aa)) forms a coiled coil. The disordered stretch occupies residues 567-737 (SSAAVPPAPP…MGVPPPPPFG (171 aa)). Positions 585–736 (IPPPPPPPPL…GMGVPPPPPF (152 aa)) are enriched in pro residues. The FH1 domain occupies 586–747 (PPPPPPPPLP…FGVPAAPVLP (162 aa)). Residue Thr-751 is modified to Phosphothreonine. Residues 752–1154 (PKKVYKPEVQ…MRRAKLAKEK (403 aa)) enclose the FH2 domain. Residues 1027-1179 (VEKASRVSAE…IDMNAEGDET (153 aa)) adopt a coiled-coil conformation. N6-acetyllysine is present on residues Lys-1040 and Lys-1086. Residue Tyr-1104 is modified to Phosphotyrosine. In terms of domain architecture, DAD spans 1177 to 1205 (DETGVMDSLLEALQSGAAFRRKRGPRQVN). A Phosphoserine modification is found at Ser-1237.

This sequence belongs to the formin homology family. Diaphanous subfamily. In terms of assembly, homodimer. Interacts with the GTP-bound form of RHOA. Interacts with RHOC, PFY1, MAPRE1, BAIAP2 and APC. Interacts with APC; acts as a scaffold protein for MAPRE1 and APC to stabilize microtubules and promote cell migration. Interacts with SCAI. Interacts with DCAF7, via FH2 domain. Interacts with NCDN. Interacts with OSBPL10, OSBPL2, VIM, TUBB and DYN1. Post-translationally, phosphorylation at Thr-751 is stimulated by cAMP and regulates stability, complex formation and mitochondrial movement. In terms of tissue distribution, widely expressed. In the organ of Corti, it is expressed at the outer and inner hair cell layers. Expression at the inner hair cell layer is restricted to inner pillar cells. Detected in cochlear spiral ganglion neurons.

It localises to the cell membrane. The protein localises to the cell projection. It is found in the ruffle membrane. Its subcellular location is the cytoplasm. The protein resides in the cytoskeleton. It localises to the microtubule organizing center. The protein localises to the centrosome. It is found in the spindle. Its subcellular location is the nucleus. Actin nucleation and elongation factor required for the assembly of F-actin structures, such as actin cables and stress fibers. Binds to the barbed end of the actin filament and slows down actin polymerization and depolymerization. Required for cytokinesis, and transcriptional activation of the serum response factor. DFR proteins couple Rho and Src tyrosine kinase during signaling and the regulation of actin dynamics. Functions as a scaffold protein for MAPRE1 and APC to stabilize microtubules and promote cell migration. Has neurite outgrowth promoting activity. Acts in a Rho-dependent manner to recruit PFY1 to the membrane. The MEMO1-RHOA-DIAPH1 signaling pathway plays an important role in ERBB2-dependent stabilization of microtubules at the cell cortex. It controls the localization of APC and CLASP2 to the cell membrane, via the regulation of GSK3B activity. In turn, membrane-bound APC allows the localization of the MACF1 to the cell membrane, which is required for microtubule capture and stabilization. Plays a role in the regulation of cell morphology and cytoskeletal organization. Required in the control of cell shape. Also acts as an actin nucleation and elongation factor in the nucleus by promoting nuclear actin polymerization inside the nucleus to drive serum-dependent SRF-MRTFA activity. This Mus musculus (Mouse) protein is Protein diaphanous homolog 1 (Diaph1).